A 428-amino-acid polypeptide reads, in one-letter code: Histidine--tRNA ligase (428 aa).

The protein belongs to the class-II aminoacyl-tRNA synthetase family. Homodimer.

The protein localises to the cytoplasm. It carries out the reaction tRNA(His) + L-histidine + ATP = L-histidyl-tRNA(His) + AMP + diphosphate + H(+). The polypeptide is Histidine--tRNA ligase (Mesomycoplasma hyopneumoniae (strain 7448) (Mycoplasma hyopneumoniae)).